The following is a 383-amino-acid chain: MILSPADQERIETFWNYCLKHQYFNIGYPESADFDYSALFRFFKFSINNCGDWKDYSNYALNSFDFEKDVMAYFAEIFQIPFEESWGYVTNGGTEGNMFGCYLARELFPDSTLYYSKDTHYSVRKIAKLLQMKSCVIESLDNGEIDYDDLIHKIKTNKESHPIIFANIGTTMTGAIDDIEMIQERLAQIGIMRRDYYIHADAALSGMILPFVDHPQAFSFAHGIDSICVSGHKMIGSPIPCGIVVAKRQNVERISVDVDYISTRDQTISGSRNGHTVLLMWAAIRSQTNLQRRQRIQHCLKMAQYAVDRFQAVGIPAWRNPNSITVVFPCPSEHIWKKHYLATSGNMAHLITTAHHRDTRQIDSLIDDVIFDLQGASKRTVGF.

Histidine 120 contributes to the substrate binding site. Lysine 233 is modified (N6-(pyridoxal phosphate)lysine).

This sequence belongs to the group II decarboxylase family. As to quaternary structure, homotetramer. It depends on pyridoxal 5'-phosphate as a cofactor.

The enzyme catalyses L-histidine + H(+) = histamine + CO2. This is Histidine decarboxylase from Acinetobacter baumannii (strain ACICU).